Consider the following 219-residue polypeptide: Probable nicotinate-nucleotide adenylyltransferase (219 aa).

The protein belongs to the NadD family.

It catalyses the reaction nicotinate beta-D-ribonucleotide + ATP + H(+) = deamido-NAD(+) + diphosphate. It participates in cofactor biosynthesis; NAD(+) biosynthesis; deamido-NAD(+) from nicotinate D-ribonucleotide: step 1/1. In terms of biological role, catalyzes the reversible adenylation of nicotinate mononucleotide (NaMN) to nicotinic acid adenine dinucleotide (NaAD). The polypeptide is Probable nicotinate-nucleotide adenylyltransferase (Cronobacter sakazakii (strain ATCC BAA-894) (Enterobacter sakazakii)).